Consider the following 270-residue polypeptide: Vegetative storage protein 1 (270 aa).

The first 17 residues, 1–17, serve as a signal peptide directing secretion; sequence MKILSLSLLLLLAATVS. N-linked (GlcNAc...) asparagine glycans are attached at residues Asn-115 and Asn-215.

The protein belongs to the APS1/VSP family. As to expression, expressed in leaves and in gynoecia, especially in styles, the basal and distal ends of ovaries and in siliques.

Its function is as follows. May function as somatic storage protein during early seedling development. The polypeptide is Vegetative storage protein 1 (VSP1) (Arabidopsis thaliana (Mouse-ear cress)).